The chain runs to 470 residues: Tigger transposable element-derived protein 3 (470 aa).

Positions 3–55 (LNTKKKLHALSLAEKIQVLELLDESKMSQSEVARRFQVSQPQISRICKNKEKL) constitute an HTH psq-type domain. 2 consecutive DNA-binding regions (H-T-H motif) follow at residues 31 to 51 (QSEV…ICKN) and 100 to 130 (PMLL…WKRR). An HTH CENPB-type domain is found at 67–137 (ERKRKRESKY…KRRNNVGFGT (71 aa)). In terms of domain architecture, DDE-1 spans 167 to 360 (FSPEDVFGCA…VPRQLILSSF (194 aa)). A compositionally biased stretch (basic and acidic residues) spans 402–421 (DPGPRVCKEETGTEDSGREE). Residues 402–426 (DPGPRVCKEETGTEDSGREEDGFEP) are disordered.

Belongs to the tigger transposable element derived protein family.

It is found in the nucleus. The polypeptide is Tigger transposable element-derived protein 3 (Tigd3) (Mus musculus (Mouse)).